The sequence spans 388 residues: LL-diaminopimelate aminotransferase (388 aa).

Substrate-binding residues include tyrosine 16 and glycine 41. Pyridoxal 5'-phosphate-binding positions include tyrosine 70, 104–105 (SK), tyrosine 129, asparagine 179, tyrosine 210, and 239–241 (SLS). 3 residues coordinate substrate: lysine 105, tyrosine 129, and asparagine 179. Lysine 242 is modified (N6-(pyridoxal phosphate)lysine). Arginine 250 contacts pyridoxal 5'-phosphate. A substrate-binding site is contributed by arginine 368.

This sequence belongs to the class-I pyridoxal-phosphate-dependent aminotransferase family. LL-diaminopimelate aminotransferase subfamily. In terms of assembly, homodimer. Pyridoxal 5'-phosphate serves as cofactor.

The enzyme catalyses (2S,6S)-2,6-diaminopimelate + 2-oxoglutarate = (S)-2,3,4,5-tetrahydrodipicolinate + L-glutamate + H2O + H(+). Its pathway is amino-acid biosynthesis; L-lysine biosynthesis via DAP pathway; LL-2,6-diaminopimelate from (S)-tetrahydrodipicolinate (aminotransferase route): step 1/1. In terms of biological role, involved in the synthesis of meso-diaminopimelate (m-DAP or DL-DAP), required for both lysine and peptidoglycan biosynthesis. Catalyzes the direct conversion of tetrahydrodipicolinate to LL-diaminopimelate. This chain is LL-diaminopimelate aminotransferase, found in Maridesulfovibrio salexigens (strain ATCC 14822 / DSM 2638 / NCIMB 8403 / VKM B-1763) (Desulfovibrio salexigens).